A 429-amino-acid polypeptide reads, in one-letter code: Serine hydroxymethyltransferase (429 aa).

Residues Leu-126 and 130 to 132 (GHL) each bind (6S)-5,6,7,8-tetrahydrofolate. An N6-(pyridoxal phosphate)lysine modification is found at Lys-235. Position 359–361 (359–361 (SPF)) interacts with (6S)-5,6,7,8-tetrahydrofolate.

It belongs to the SHMT family. In terms of assembly, homodimer. Requires pyridoxal 5'-phosphate as cofactor.

It localises to the cytoplasm. It carries out the reaction (6R)-5,10-methylene-5,6,7,8-tetrahydrofolate + glycine + H2O = (6S)-5,6,7,8-tetrahydrofolate + L-serine. Its pathway is one-carbon metabolism; tetrahydrofolate interconversion. It participates in amino-acid biosynthesis; glycine biosynthesis; glycine from L-serine: step 1/1. In terms of biological role, catalyzes the reversible interconversion of serine and glycine with tetrahydrofolate (THF) serving as the one-carbon carrier. This reaction serves as the major source of one-carbon groups required for the biosynthesis of purines, thymidylate, methionine, and other important biomolecules. Also exhibits THF-independent aldolase activity toward beta-hydroxyamino acids, producing glycine and aldehydes, via a retro-aldol mechanism. The sequence is that of Serine hydroxymethyltransferase from Prochlorococcus marinus (strain MIT 9313).